Consider the following 207-residue polypeptide: 3,4-dihydroxy-2-butanone 4-phosphate synthase (207 aa).

Residues arginine 28–glutamate 29, aspartate 33, arginine 140–threonine 144, and glutamate 164 contribute to the D-ribulose 5-phosphate site. Glutamate 29 is a binding site for Mg(2+). Residue histidine 143 participates in Mg(2+) binding.

The protein belongs to the DHBP synthase family. Homodimer. It depends on Mg(2+) as a cofactor. Requires Mn(2+) as cofactor.

The catalysed reaction is D-ribulose 5-phosphate = (2S)-2-hydroxy-3-oxobutyl phosphate + formate + H(+). It functions in the pathway cofactor biosynthesis; riboflavin biosynthesis; 2-hydroxy-3-oxobutyl phosphate from D-ribulose 5-phosphate: step 1/1. In terms of biological role, catalyzes the conversion of D-ribulose 5-phosphate to formate and 3,4-dihydroxy-2-butanone 4-phosphate. This chain is 3,4-dihydroxy-2-butanone 4-phosphate synthase, found in Oceanobacillus iheyensis (strain DSM 14371 / CIP 107618 / JCM 11309 / KCTC 3954 / HTE831).